Reading from the N-terminus, the 177-residue chain is Large ribosomal subunit protein uL6 (177 aa).

Belongs to the universal ribosomal protein uL6 family. Part of the 50S ribosomal subunit.

This protein binds to the 23S rRNA, and is important in its secondary structure. It is located near the subunit interface in the base of the L7/L12 stalk, and near the tRNA binding site of the peptidyltransferase center. In Herminiimonas arsenicoxydans, this protein is Large ribosomal subunit protein uL6.